A 145-amino-acid chain; its full sequence is Synaptojanin-2-binding protein (145 aa).

Topologically, residues 1–117 (MNGRVDYLVS…VHRGDGEPSG (117 aa)) are cytoplasmic. Positions 13 to 100 (EINLTRGPSG…AVSLRVQHRL (88 aa)) constitute a PDZ domain. A helical membrane pass occupies residues 118–138 (VPVAVVLLPVFALTLVAVWAF). At 139-145 (VRYRKQL) the chain is on the mitochondrial intermembrane side.

In terms of assembly, binds (via the PDZ domain) to isoform 2A of SYNJ2 (via the unique motif in the C-terminus). Interacts (via C-terminus) with RALBP1. Interacts (via PDZ domain) with ACVR2A (via C-terminus) and ACVR2B (via C-terminus). Forms a ternary complex with ACVR2A and RALBP1. Interacts with MAPK12. Interacts with DLL1; enhances DLL1 protein stability, and promotes notch signaling in endothelial cells. Widely expressed.

The protein resides in the mitochondrion outer membrane. Functionally, regulates endocytosis of activin type 2 receptor kinases through the Ral/RALBP1-dependent pathway and may be involved in suppression of activin-induced signal transduction. This Rattus norvegicus (Rat) protein is Synaptojanin-2-binding protein (Synj2bp).